A 279-amino-acid chain; its full sequence is Proteasome subunit beta (279 aa).

Positions 1-51 are cleaved as a propeptide — removed in mature form; by autocatalysis; it reads MTFDASGRLPEAFLTPGGSSFMDFLAGHAPDLLPGRRSLGTGDLSKDVPHG. Catalysis depends on Thr52, which acts as the Nucleophile.

This sequence belongs to the peptidase T1B family. In terms of assembly, the 20S proteasome core is composed of 14 alpha and 14 beta subunits that assemble into four stacked heptameric rings, resulting in a barrel-shaped structure. The two inner rings, each composed of seven catalytic beta subunits, are sandwiched by two outer rings, each composed of seven alpha subunits. The catalytic chamber with the active sites is on the inside of the barrel. Has a gated structure, the ends of the cylinder being occluded by the N-termini of the alpha-subunits. Is capped by the proteasome-associated ATPase, ARC.

It localises to the cytoplasm. The enzyme catalyses Cleavage of peptide bonds with very broad specificity.. The protein operates within protein degradation; proteasomal Pup-dependent pathway. The formation of the proteasomal ATPase ARC-20S proteasome complex, likely via the docking of the C-termini of ARC into the intersubunit pockets in the alpha-rings, may trigger opening of the gate for substrate entry. Interconversion between the open-gate and close-gate conformations leads to a dynamic regulation of the 20S proteasome proteolysis activity. In terms of biological role, component of the proteasome core, a large protease complex with broad specificity involved in protein degradation. This chain is Proteasome subunit beta, found in Kribbella flavida (strain DSM 17836 / JCM 10339 / NBRC 14399).